The primary structure comprises 227 residues: Cytochrome c oxidase subunit 2 (227 aa).

The Mitochondrial intermembrane segment spans residues 1–14 (MAHPVQLGLQDATS). The helical transmembrane segment at 15 to 45 (PVMEELITFHDHALMAMSLISLLVLYALFST) threads the bilayer. Topologically, residues 46 to 59 (LTTKLTNTNITDAQ) are mitochondrial matrix. Residues 60–87 (EMEIIWTILPAIILVLIALPSLRILYLT) traverse the membrane as a helical segment. Topologically, residues 88–227 (DEVNNPSFTI…IFEMGPVFTL (140 aa)) are mitochondrial intermembrane. Residues histidine 161, cysteine 196, glutamate 198, cysteine 200, histidine 204, and methionine 207 each contribute to the Cu cation site. Position 198 (glutamate 198) interacts with Mg(2+).

This sequence belongs to the cytochrome c oxidase subunit 2 family. In terms of assembly, component of the cytochrome c oxidase (complex IV, CIV), a multisubunit enzyme composed of 14 subunits. The complex is composed of a catalytic core of 3 subunits MT-CO1, MT-CO2 and MT-CO3, encoded in the mitochondrial DNA, and 11 supernumerary subunits COX4I, COX5A, COX5B, COX6A, COX6B, COX6C, COX7A, COX7B, COX7C, COX8 and NDUFA4, which are encoded in the nuclear genome. The complex exists as a monomer or a dimer and forms supercomplexes (SCs) in the inner mitochondrial membrane with NADH-ubiquinone oxidoreductase (complex I, CI) and ubiquinol-cytochrome c oxidoreductase (cytochrome b-c1 complex, complex III, CIII), resulting in different assemblies (supercomplex SCI(1)III(2)IV(1) and megacomplex MCI(2)III(2)IV(2)). Found in a complex with TMEM177, COA6, COX18, COX20, SCO1 and SCO2. Interacts with TMEM177 in a COX20-dependent manner. Interacts with COX20. Interacts with COX16. The cofactor is Cu cation.

It is found in the mitochondrion inner membrane. The catalysed reaction is 4 Fe(II)-[cytochrome c] + O2 + 8 H(+)(in) = 4 Fe(III)-[cytochrome c] + 2 H2O + 4 H(+)(out). Functionally, component of the cytochrome c oxidase, the last enzyme in the mitochondrial electron transport chain which drives oxidative phosphorylation. The respiratory chain contains 3 multisubunit complexes succinate dehydrogenase (complex II, CII), ubiquinol-cytochrome c oxidoreductase (cytochrome b-c1 complex, complex III, CIII) and cytochrome c oxidase (complex IV, CIV), that cooperate to transfer electrons derived from NADH and succinate to molecular oxygen, creating an electrochemical gradient over the inner membrane that drives transmembrane transport and the ATP synthase. Cytochrome c oxidase is the component of the respiratory chain that catalyzes the reduction of oxygen to water. Electrons originating from reduced cytochrome c in the intermembrane space (IMS) are transferred via the dinuclear copper A center (CU(A)) of subunit 2 and heme A of subunit 1 to the active site in subunit 1, a binuclear center (BNC) formed by heme A3 and copper B (CU(B)). The BNC reduces molecular oxygen to 2 water molecules using 4 electrons from cytochrome c in the IMS and 4 protons from the mitochondrial matrix. This is Cytochrome c oxidase subunit 2 (MT-CO2) from Cercocebus galeritus (Tana river mangabey).